The sequence spans 97 residues: MSLLTEVETPTRNGWECKCSDSSDPLVIAASIIGILHLILWILDRLFFKCIYRRLKYGLKRGPSTEGVPESMREEYRQEQQSAVDVDDGHFVNIELE.

At methionine 1–serine 22 the chain is on the virion surface side. Residues serine 23 to leucine 43 traverse the membrane as a helical; Signal-anchor for type III membrane protein segment. At aspartate 44–glutamate 97 the chain is on the intravirion side. A lipid anchor (S-palmitoyl cysteine; by host) is attached at cysteine 50. The interval lysine 60–alanine 83 is disordered. Phosphoserine; by host occurs at positions 64 and 82.

The protein belongs to the influenza viruses matrix protein M2 family. In terms of assembly, homotetramer; composed of two disulfide-linked dimers held together by non-covalent interactions. May interact with matrix protein 1.

The protein localises to the virion membrane. It localises to the host apical cell membrane. Its activity is regulated as follows. The M2 protein from most influenza A strains is inhibited by amantadine and rimantadine, resulting in viral uncoating incapacity. Emergence of amantadine-resistant variants is usually rapid. Functionally, forms a proton-selective ion channel that is necessary for the efficient release of the viral genome during virus entry. After attaching to the cell surface, the virion enters the cell by endocytosis. Acidification of the endosome triggers M2 ion channel activity. The influx of protons into virion interior is believed to disrupt interactions between the viral ribonucleoprotein (RNP), matrix protein 1 (M1), and lipid bilayers, thereby freeing the viral genome from interaction with viral proteins and enabling RNA segments to migrate to the host cell nucleus, where influenza virus RNA transcription and replication occur. Also plays a role in viral proteins secretory pathway. Elevates the intravesicular pH of normally acidic compartments, such as trans-Golgi network, preventing newly formed hemagglutinin from premature switching to the fusion-active conformation. The chain is Matrix protein 2 from Influenza A virus (strain A/Turkey/Oregon/1971 H7N3).